Reading from the N-terminus, the 587-residue chain is Protein FRIGIDA-ESSENTIAL 1 (587 aa).

The C3H1-type zinc-finger motif lies at 96-123; it reads KRAALPCKFFAKGWCFNGVSCKFLHVKE. Disordered regions lie at residues 264-346, 368-421, and 467-492; these read DMGS…SFTI, GDRP…HQET, and IKPA…SDEI. Positions 294–304 are enriched in low complexity; that stretch reads NGNSLSGSGSL. Positions 470–479 are enriched in basic and acidic residues; that stretch reads AGHDSWHRSD.

In terms of assembly, component of the transcription activator complex FRI-C composed of FRI, FRL1, SUF4, FLX and FES1. Interacts with FLX, (via C-terminus) with FRI (via C-terminus), and with RIN1, a component of the SWR1 chromatin-remodeling complex. In terms of tissue distribution, expressed in root and shoot apices and vasculature.

It localises to the nucleus. Its function is as follows. Transcriptional activator involved in the FRIGIDA-mediated vernalization pathway, but not in the autonomous flowering pathway. Acts cooperatively with FRI (FRIGIDA) or FRL1 (FRIGIDA-LIKE 1) to promote FLC (FLOWERING LOCUS C) expression. Required for the stabilization of the FRI-C complex. The sequence is that of Protein FRIGIDA-ESSENTIAL 1 (FES1) from Arabidopsis thaliana (Mouse-ear cress).